The following is a 903-amino-acid chain: DNA gyrase subunit A (903 aa).

The Topo IIA-type catalytic domain occupies 36–499 (LPDARDGFKP…AIDDSDDEDL (464 aa)). Residue Tyr124 is the O-(5'-phospho-DNA)-tyrosine intermediate of the active site. A GyrA-box motif is present at residues 526–532 (QNRGGKG). Residues 881–895 (VDDDSVVKDDAEKQE) show a composition bias toward basic and acidic residues. Residues 881 to 903 (VDDDSVVKDDAEKQEIGPTETEE) are disordered.

This sequence belongs to the type II topoisomerase GyrA/ParC subunit family. In terms of assembly, heterotetramer, composed of two GyrA and two GyrB chains. In the heterotetramer, GyrA contains the active site tyrosine that forms a transient covalent intermediate with DNA, while GyrB binds cofactors and catalyzes ATP hydrolysis.

It localises to the cytoplasm. The catalysed reaction is ATP-dependent breakage, passage and rejoining of double-stranded DNA.. Functionally, a type II topoisomerase that negatively supercoils closed circular double-stranded (ds) DNA in an ATP-dependent manner to modulate DNA topology and maintain chromosomes in an underwound state. Negative supercoiling favors strand separation, and DNA replication, transcription, recombination and repair, all of which involve strand separation. Also able to catalyze the interconversion of other topological isomers of dsDNA rings, including catenanes and knotted rings. Type II topoisomerases break and join 2 DNA strands simultaneously in an ATP-dependent manner. This chain is DNA gyrase subunit A, found in Fibrobacter succinogenes (strain ATCC 19169 / S85).